We begin with the raw amino-acid sequence, 323 residues long: Protein translocase subunit SecF (323 aa).

6 helical membrane-spanning segments follow: residues 19–39 (GVIV…FKGF), 138–158 (ILSL…RYEW), 162–182 (LASV…VIVF), 189–209 (EVIA…IIIF), 244–264 (LTVF…IIGF), and 269–289 (LIGT…VALL).

Belongs to the SecD/SecF family. SecF subfamily. As to quaternary structure, forms a complex with SecD. Part of the essential Sec protein translocation apparatus which comprises SecA, SecYEG and auxiliary proteins SecDF-YajC and YidC.

Its subcellular location is the cell inner membrane. Its function is as follows. Part of the Sec protein translocase complex. Interacts with the SecYEG preprotein conducting channel. SecDF uses the proton motive force (PMF) to complete protein translocation after the ATP-dependent function of SecA. This Helicobacter pylori (strain J99 / ATCC 700824) (Campylobacter pylori J99) protein is Protein translocase subunit SecF.